The following is a 99-amino-acid chain: Large ribosomal subunit protein uL23 (99 aa).

Belongs to the universal ribosomal protein uL23 family. Part of the 50S ribosomal subunit. Contacts protein L29, and trigger factor when it is bound to the ribosome.

One of the early assembly proteins it binds 23S rRNA. One of the proteins that surrounds the polypeptide exit tunnel on the outside of the ribosome. Forms the main docking site for trigger factor binding to the ribosome. The sequence is that of Large ribosomal subunit protein uL23 from Xanthomonas axonopodis pv. citri (strain 306).